We begin with the raw amino-acid sequence, 561 residues long: ATP-dependent RNA helicase MRH4, mitochondrial (561 aa).

Residues M1–Y26 constitute a mitochondrion transit peptide. The tract at residues G29–N72 is disordered. The span at K50 to N62 shows a compositional bias: basic residues. The Q motif motif lies at S98–K129. In terms of domain architecture, Helicase ATP-binding spans T131 to A319. A144 to N151 lines the ATP pocket. The DEAD box signature appears at S267–M270. The Helicase C-terminal domain occupies A350–T539.

Belongs to the DEAD box helicase family. MRH4 subfamily.

It is found in the mitochondrion. It catalyses the reaction ATP + H2O = ADP + phosphate + H(+). Functionally, ATP-binding RNA helicase involved in mitochondrial RNA metabolism. Required for maintenance of mitochondrial DNA. The polypeptide is ATP-dependent RNA helicase MRH4, mitochondrial (MRH4) (Saccharomyces cerevisiae (strain YJM789) (Baker's yeast)).